We begin with the raw amino-acid sequence, 515 residues long: MKMIILVVSLHVLRNSAAVRVLCMFPTPSYSHQTVFDVYVNALLRRGHSLVVISPKIHNHNHGHRHHRHENLTEIDVGSVTNNFFKRLLQDSKVSRKRGIVSDSSTVTRVNYLGLARMISAQFEHEQVKRLLRSNQTFDVIVIEAFVSYPLILSYFFKDTPVIQISSGHGTAENFETMGAVARHPVYYPNMWRDRFKGLSVWQTVRQVFTEIRLYMEFSQLDADQSAMMKRQFGSKVPDVDALRKNVHMMFVNTHPVFDTNRPVPSNVQYLGGIHIDPAVTSVADEIDNDLAEFLENSTMGVVYVSLGSSVRASDMDSNMLNVFVETFRSIPYRVLWKVDKSDKIFDNIPSNVLIQRWFPQRRVLKHRNVKVFITQGGVQSTDEAIDAGVPMFGVPIMGDQFYNVYMYETYGIGRGVDTLTVDARQLTEIVMDVADNEKYKNGTLWLRDAIMDQPMRPLEKAVWYTEHVARRKGAKKHLGTRAANVTYSKYAMFDLILPMLITIFSTYLQKILSI.

The first 31 residues, 1 to 31 (MKMIILVVSLHVLRNSAAVRVLCMFPTPSYS), serve as a signal peptide directing secretion.

This sequence belongs to the UDP-glycosyltransferase family.

Its function is as follows. Catalyzes the transfer of glucose from UDP-glucose to ecdysteroids which are insect molting hormones. Expression of egt interferes with normal insect development and block molting. In Spodoptera littoralis nuclear polyhedrosis virus (SlNPV), this protein is Ecdysteroid UDP-glucosyltransferase (EGT).